Consider the following 340-residue polypeptide: Guanine nucleotide-binding protein subunit beta-1 (340 aa).

Residue Ser-29 is modified to Phosphoserine. 7 WD repeats span residues 53–92, 95–134, 141–179, 182–221, 224–263, 268–307, and 310–340; these read GHLA…KVHA, LRSS…GNVR, GHGG…QVTS, GHTG…CKQT, GHES…ELAM, NIIC…RSGI, and GHDN…RVWN.

It belongs to the WD repeat G protein beta family. In terms of assembly, g proteins are composed of 3 units, alpha, beta and gamma. As to expression, expressed in the brain neuropil and cortex, and the thoracic ganglion (at protein level). Expression detected in eye at protein level but not at mRNA level, suggesting cross reactivity of antibodies to the similar Gbeta76C protein.

Its function is as follows. Guanine nucleotide-binding proteins (G proteins) are involved as a modulator or transducer in various transmembrane signaling systems. The beta and gamma chains are required for the GTPase activity, for replacement of GDP by GTP, and for G protein-effector interaction. In Drosophila melanogaster (Fruit fly), this protein is Guanine nucleotide-binding protein subunit beta-1 (Gbeta13F).